Reading from the N-terminus, the 123-residue chain is Transmembrane protein 254 (123 aa).

A2 carries the N-acetylalanine modification. 3 consecutive transmembrane segments (helical) span residues 15–35, 61–81, and 95–115; these read LFWFTVITLSFGYYTWVVFWP, LCNGYWLAWLIHVGESLYAIV, and LLWFLQTFFFGIASLTILIAY.

It localises to the membrane. The protein is Transmembrane protein 254 (TMEM254) of Homo sapiens (Human).